Consider the following 68-residue polypeptide: Purkinje cell protein 4-like protein 1 (68 aa).

The segment covering 1–16 has biased composition (polar residues); it reads MSELNTKTPPAANQAS. Residues 1–42 are disordered; it reads MSELNTKTPPAANQASDPEEKGKPGSIKKAEEEEEIDIDLTA. Thr8 is modified (phosphothreonine). A compositionally biased stretch (basic and acidic residues) spans 18–31; it reads PEEKGKPGSIKKAE. An IQ domain is found at 45–68; the sequence is TEKAALAIQGKFRRFQKRKKDSSS.

The protein belongs to the PCP4 family. As to expression, expressed in laminar and nuclear structures of the CNS.

This is Purkinje cell protein 4-like protein 1 (Pcp4l1) from Mus musculus (Mouse).